The chain runs to 69 residues: U2-agatoxin-Ao1i (69 aa).

Positions 1-20 are cleaved as a signal peptide; it reads MKAIISLLLISAMVFSMIEA. A propeptide spanning residues 21–34 is cleaved from the precursor; that stretch reads VPVXXGLQLFESER. 3 disulfides stabilise this stretch: Cys-36/Cys-52, Cys-43/Cys-57, and Cys-51/Cys-67. A Leucine amide modification is found at Leu-68.

The protein belongs to the neurotoxin 01 (U2-agtx) family. In terms of tissue distribution, expressed by the venom gland.

It is found in the secreted. In terms of biological role, insect active toxin causing rapid but reversible paralysis in crickets. No activity shown in mammals. Does not show effect on mammalian voltage-gated calcium channels. The polypeptide is U2-agatoxin-Ao1i (Agelena orientalis (Funnel-web spider)).